Here is an 89-residue protein sequence, read N- to C-terminus: Small ribosomal subunit protein uS15 (89 aa).

This sequence belongs to the universal ribosomal protein uS15 family. As to quaternary structure, part of the 30S ribosomal subunit. Forms a bridge to the 50S subunit in the 70S ribosome, contacting the 23S rRNA.

Functionally, one of the primary rRNA binding proteins, it binds directly to 16S rRNA where it helps nucleate assembly of the platform of the 30S subunit by binding and bridging several RNA helices of the 16S rRNA. Forms an intersubunit bridge (bridge B4) with the 23S rRNA of the 50S subunit in the ribosome. The sequence is that of Small ribosomal subunit protein uS15 from Klebsiella pneumoniae subsp. pneumoniae (strain ATCC 700721 / MGH 78578).